The primary structure comprises 118 residues: Large ribosomal subunit protein uL24 (118 aa).

Belongs to the universal ribosomal protein uL24 family. In terms of assembly, part of the 50S ribosomal subunit.

Functionally, one of two assembly initiator proteins, it binds directly to the 5'-end of the 23S rRNA, where it nucleates assembly of the 50S subunit. Its function is as follows. One of the proteins that surrounds the polypeptide exit tunnel on the outside of the subunit. The protein is Large ribosomal subunit protein uL24 of Prochlorococcus marinus (strain NATL2A).